Reading from the N-terminus, the 148-residue chain is Putative antiporter subunit mnhG2 (148 aa).

Transmembrane regions (helical) follow at residues 11–31 (IAAI…IGLI), 51–71 (VLLT…YLSV), and 72–92 (RLIL…HLIS). The segment at 125–148 (EQLKQRAHEREERRRKTYEKEHDY) is disordered. The segment covering 127–148 (LKQRAHEREERRRKTYEKEHDY) has biased composition (basic and acidic residues).

The protein belongs to the CPA3 antiporters (TC 2.A.63) subunit G family. In terms of assembly, may form a heterooligomeric complex that consists of seven subunits: mnhA2, mnhB2, mnhC2, mnhD2, mnhE2, mnhF2 and mnhG2.

The protein resides in the cell membrane. The polypeptide is Putative antiporter subunit mnhG2 (mnhG2) (Staphylococcus saprophyticus subsp. saprophyticus (strain ATCC 15305 / DSM 20229 / NCIMB 8711 / NCTC 7292 / S-41)).